A 206-amino-acid chain; its full sequence is Large ribosomal subunit protein uL4 (206 aa).

The tract at residues 46–95 (GNRAQKTRAEVKHSTKKPWRQKGTGRARSGMTSSPLWRKGGRAFPNKPDE) is disordered. The segment covering 59–70 (STKKPWRQKGTG) has biased composition (basic residues).

The protein belongs to the universal ribosomal protein uL4 family. Part of the 50S ribosomal subunit.

Its function is as follows. One of the primary rRNA binding proteins, this protein initially binds near the 5'-end of the 23S rRNA. It is important during the early stages of 50S assembly. It makes multiple contacts with different domains of the 23S rRNA in the assembled 50S subunit and ribosome. Functionally, forms part of the polypeptide exit tunnel. The chain is Large ribosomal subunit protein uL4 from Neisseria meningitidis serogroup C (strain 053442).